Reading from the N-terminus, the 160-residue chain is Interleukin-36 alpha (160 aa).

Positions 1 to 7 are excised as a propeptide; it reads MNKEKEL. The residue at position 98 (Tyr-98) is a 3'-nitrotyrosine.

The protein belongs to the IL-1 family. Interacts with TMED10; the interaction mediates the translocation from the cytoplasm into the ERGIC (endoplasmic reticulum-Golgi intermediate compartment) and thereby secretion. N-terminal truncation leads to a dramatic enhancement of its activity (&gt;1000-fold). In terms of tissue distribution, highly expressed in embryonic tissue and in tissues containing epithelial cells. Elevated expression levels are detected in chronic kidney disease; expressed inepithelia from the distal convoluted tubules (DCTs) to the cortical collecting ducts (CCDs) in single nephrons (at protein level).

The protein resides in the cytoplasm. The protein localises to the secreted. In terms of biological role, cytokine that binds to and signals through the IL1RL2/IL-36R receptor which in turn activates NF-kappa-B and MAPK signaling pathways in target cells linked to a pro-inflammatory response. Part of the IL-36 signaling system that is thought to be present in epithelial barriers and to take part in local inflammatory response; similar to the IL-1 system with which it shares the coreceptor IL1RAP. Seems to be involved in skin inflammatory response by acting on keratinocytes, dendritic cells and indirectly on T-cells to drive tissue infiltration, cell maturation and cell proliferation. Induces the production of pro-inflammatory cytokines, including IL-12, Il-1 beta, IL-6, TNF-alpha and IL-23 in bone marrow-derived dendritic cells (BMDCs). Involved in dendritic cell maturation by stimulating the surface expression of CD80, CD86 and MHC class II. Induces the production of IFN-gamma, IL-4 and IL-17 by cultured CD4(+) T-cells and splenocytes. May play a role in pro-inflammatory effects in the lung: induces the expression of CXCL1 and CXCL2 in the lung, and the expression of TNF-alpha, IL-36c, IL-1A, IL-1B, CXCL1 and CXCL2 in isolated splenic CD11c(+) alveolar macrophages. May be involved in T-cell maturation by stimulating the surface expression of CD40 and modestly CD80 and CD86 in splenic CD11c(+) cells. May be involved in CD4(+) T-cell proliferation. Induces NF-kappa B activation in macrophages. In Mus musculus (Mouse), this protein is Interleukin-36 alpha.